The sequence spans 152 residues: MSFDFMTPNKTKNSTVGNYAIVETSGTQFWLEADRYYDIDRINANVDETVTLDKVLLINDQKGFAIGKPYIKGASVQLKVMAHKRGPKIIVYKMRPKKKTRTKNGHRQELTRVMVTSISNGEKPKKATTSAKPNTKKPSTAVKSSKVEKTPE.

The segment at 115-152 is disordered; it reads VTSISNGEKPKKATTSAKPNTKKPSTAVKSSKVEKTPE. The span at 127-143 shows a compositional bias: polar residues; sequence ATTSAKPNTKKPSTAVK.

Belongs to the bacterial ribosomal protein bL21 family. In terms of assembly, part of the 50S ribosomal subunit. Contacts protein L20.

Functionally, this protein binds to 23S rRNA in the presence of protein L20. This chain is Large ribosomal subunit protein bL21, found in Prochlorococcus marinus (strain SARG / CCMP1375 / SS120).